Here is a 257-residue protein sequence, read N- to C-terminus: Putative hydro-lyase Bphy_2364 (257 aa).

This sequence belongs to the D-glutamate cyclase family.

The sequence is that of Putative hydro-lyase Bphy_2364 from Paraburkholderia phymatum (strain DSM 17167 / CIP 108236 / LMG 21445 / STM815) (Burkholderia phymatum).